A 425-amino-acid polypeptide reads, in one-letter code: tRNA(Ile)-lysidine synthase (425 aa).

An ATP-binding site is contributed by serine 27–serine 32.

This sequence belongs to the tRNA(Ile)-lysidine synthase family.

Its subcellular location is the cytoplasm. The enzyme catalyses cytidine(34) in tRNA(Ile2) + L-lysine + ATP = lysidine(34) in tRNA(Ile2) + AMP + diphosphate + H(+). Ligates lysine onto the cytidine present at position 34 of the AUA codon-specific tRNA(Ile) that contains the anticodon CAU, in an ATP-dependent manner. Cytidine is converted to lysidine, thus changing the amino acid specificity of the tRNA from methionine to isoleucine. This Streptococcus sanguinis (strain SK36) protein is tRNA(Ile)-lysidine synthase.